We begin with the raw amino-acid sequence, 394 residues long: F-box/kelch-repeat protein At1g23390 (394 aa).

The region spanning 15-62 is the F-box domain; it reads EEESSIDGDILESILSYLPLLDLDSACQVSKSWNRAVFYSLRRLKTMP. Kelch repeat units lie at residues 65-111, 155-204, 206-252, and 321-369; these read FVYN…RSSH, SLII…TWLS, AVSS…SIGF, and MVYV…VIVA.

The polypeptide is F-box/kelch-repeat protein At1g23390 (Arabidopsis thaliana (Mouse-ear cress)).